We begin with the raw amino-acid sequence, 396 residues long: Phosphoglycerate kinase (396 aa).

Substrate contacts are provided by residues 21–23, arginine 36, 59–62, arginine 113, and arginine 146; these read DLN and HLGR. ATP-binding positions include lysine 197, glutamate 319, and 345–348; that span reads GGDT.

This sequence belongs to the phosphoglycerate kinase family. As to quaternary structure, monomer.

The protein resides in the cytoplasm. It carries out the reaction (2R)-3-phosphoglycerate + ATP = (2R)-3-phospho-glyceroyl phosphate + ADP. It functions in the pathway carbohydrate degradation; glycolysis; pyruvate from D-glyceraldehyde 3-phosphate: step 2/5. This is Phosphoglycerate kinase from Legionella pneumophila (strain Paris).